The sequence spans 100 residues: Phosphoribosyl-ATP pyrophosphatase (100 aa).

The protein belongs to the PRA-PH family.

The protein localises to the cytoplasm. The enzyme catalyses 1-(5-phospho-beta-D-ribosyl)-ATP + H2O = 1-(5-phospho-beta-D-ribosyl)-5'-AMP + diphosphate + H(+). Its pathway is amino-acid biosynthesis; L-histidine biosynthesis; L-histidine from 5-phospho-alpha-D-ribose 1-diphosphate: step 2/9. This Methanopyrus kandleri (strain AV19 / DSM 6324 / JCM 9639 / NBRC 100938) protein is Phosphoribosyl-ATP pyrophosphatase (hisE).